Reading from the N-terminus, the 570-residue chain is Putative diflavin flavoprotein A 5 (570 aa).

Positions 38–231 (ERGTTSNSYV…LQVRLYAVGH (194 aa)) are zinc metallo-hydrolase. A Flavodoxin-like domain is found at 260-402 (VALLYASAYG…VGTDFAQTLK (143 aa)). A flavodoxin-reductase-like region spans residues 421 to 570 (VGRIVGSVCV…INHRKTGNHY (150 aa)).

In the N-terminal section; belongs to the zinc metallo-hydrolase group 3 family. It in the C-terminal section; belongs to the flavodoxin reductase family. Fe cation is required as a cofactor.

In terms of biological role, mediates electron transfer from NADH to oxygen, reducing it to water. This modular protein has 3 redox cofactors, in other organisms the same activity requires 2 or 3 proteins. This chain is Putative diflavin flavoprotein A 5 (dfa5), found in Nostoc sp. (strain PCC 7120 / SAG 25.82 / UTEX 2576).